The sequence spans 281 residues: MLIVTGMSGAGKSVALHTLEDLGYYCVDNLPLILLDAFVRDFAQHHAQPVAVAIDARNAQDISALSDKLQTMKSVTRIQILFLNAQTNVLARRFSESRRPHPLRNFGSEQIIEAIEKERKLLGSLNNIADMLIDTSNYRAADLRQQLMQLLNTTAPHLLITLQSFGFKHGIPVNADFVFDVRFLPNPYWEARLRAFNGKEQPIIDWLEQFAEPRQFAQETAHYLQHWLSYFTGQNNRAYLNIAIGCTGGQHRSVFIAESVGAILRQDFPDLHIEHRDIEKN.

6–13 lines the ATP pocket; that stretch reads GMSGAGKS. Residue 55-58 coordinates GTP; that stretch reads DARN.

The protein belongs to the RapZ-like family.

Functionally, displays ATPase and GTPase activities. The sequence is that of Nucleotide-binding protein DNO_0399 from Dichelobacter nodosus (strain VCS1703A).